Consider the following 577-residue polypeptide: Arginine--tRNA ligase (577 aa).

Positions 122–132 (PNVAKEMHVGH) match the 'HIGH' region motif.

This sequence belongs to the class-I aminoacyl-tRNA synthetase family. In terms of assembly, monomer.

The protein localises to the cytoplasm. It carries out the reaction tRNA(Arg) + L-arginine + ATP = L-arginyl-tRNA(Arg) + AMP + diphosphate. In Escherichia fergusonii (strain ATCC 35469 / DSM 13698 / CCUG 18766 / IAM 14443 / JCM 21226 / LMG 7866 / NBRC 102419 / NCTC 12128 / CDC 0568-73), this protein is Arginine--tRNA ligase.